Reading from the N-terminus, the 344-residue chain is MLIIDIKGTEISQQEIEILSHPLVAGLILFSRNFVDKAQLTALIKEIRQKVTKPLLITIDQEGGRVQRFREGFTRLPAMQAFGQLAKHPQEAIIWAKQAGWLMAAEMFALDIDLSFAPVLDLGHKCKAIGDRSFGEKVTQILPIAEGFIDGMREIGMATTGKHFPGHGQVIADSHLETPFDERAKANIFNYDIQPFEYFIAKNKLSAIMPAHVVYTQCDPHPASGSTYWLQQVLRQQLQFKGIIFSDDLGMQGANLMGNFLQRSEQAINAGCDLLLLCNQPEGVIEVLNGLTYQPNKLEQQKYLTLKKRRTIDFQQLASSPRYQQTKQHLEQLHECWLEWQTTH.

Substrate-binding positions include D60, R68, R132, and K162–H163. H175 serves as the catalytic Proton donor/acceptor. The active-site Nucleophile is D247.

It belongs to the glycosyl hydrolase 3 family. NagZ subfamily.

It localises to the cytoplasm. It catalyses the reaction Hydrolysis of terminal non-reducing N-acetyl-D-hexosamine residues in N-acetyl-beta-D-hexosaminides.. It participates in cell wall biogenesis; peptidoglycan recycling. Functionally, plays a role in peptidoglycan recycling by cleaving the terminal beta-1,4-linked N-acetylglucosamine (GlcNAc) from peptide-linked peptidoglycan fragments, giving rise to free GlcNAc, anhydro-N-acetylmuramic acid and anhydro-N-acetylmuramic acid-linked peptides. The protein is Beta-hexosaminidase of Haemophilus ducreyi (strain 35000HP / ATCC 700724).